Reading from the N-terminus, the 265-residue chain is Tryptophan synthase alpha chain (265 aa).

Active-site proton acceptor residues include glutamate 49 and aspartate 60.

This sequence belongs to the TrpA family. In terms of assembly, tetramer of two alpha and two beta chains.

It catalyses the reaction (1S,2R)-1-C-(indol-3-yl)glycerol 3-phosphate + L-serine = D-glyceraldehyde 3-phosphate + L-tryptophan + H2O. Its pathway is amino-acid biosynthesis; L-tryptophan biosynthesis; L-tryptophan from chorismate: step 5/5. Its function is as follows. The alpha subunit is responsible for the aldol cleavage of indoleglycerol phosphate to indole and glyceraldehyde 3-phosphate. The protein is Tryptophan synthase alpha chain of Cupriavidus taiwanensis (strain DSM 17343 / BCRC 17206 / CCUG 44338 / CIP 107171 / LMG 19424 / R1) (Ralstonia taiwanensis (strain LMG 19424)).